The following is a 2188-amino-acid chain: Glutamate synthase 2 [NADH], chloroplastic (2188 aa).

The N-terminal 30 residues, 1-30 (MSAAQGLALKLRAAPAAGGVRGEKRRRAAS), are a transit peptide targeting the chloroplast. Disordered stretches follow at residues 14–40 (APAA…ARPR) and 61–94 (VAPR…PESS). Low complexity predominate over residues 65-80 (ASASRQAEAGAGAGAA). Cys-107 (nucleophile) is an active-site residue. The Glutamine amidotransferase type-2 domain occupies 107–511 (CGVGFIAELS…PGMMLLVDFE (405 aa)). 1198–1255 (LAETHQTLVANGLRGRAVLQTDGQMKTGRDVAVACLLGAEEFGFSTAPLITLGCIMMR) lines the FMN pocket. Residues Cys-1251, Cys-1257, and Cys-1262 each coordinate [3Fe-4S] cluster. 1974–1988 (GGGDTGTDCIGTSIR) provides a ligand contact to NAD(+).

It belongs to the glutamate synthase family. As to quaternary structure, monomer. It depends on [3Fe-4S] cluster as a cofactor. FAD is required as a cofactor. Requires FMN as cofactor. As to expression, expressed in leaf blades and sheaths.

It localises to the plastid. The protein localises to the chloroplast. The catalysed reaction is 2 L-glutamate + NAD(+) = L-glutamine + 2-oxoglutarate + NADH + H(+). It participates in amino-acid biosynthesis; L-glutamate biosynthesis via GLT pathway; L-glutamate from 2-oxoglutarate and L-glutamine (NAD(+) route): step 1/1. Its pathway is energy metabolism; nitrogen metabolism. Its function is as follows. Involved in glutamate biosynthesis. This is Glutamate synthase 2 [NADH], chloroplastic from Oryza sativa subsp. japonica (Rice).